The sequence spans 374 residues: Carnitine monooxygenase oxygenase subunit (374 aa).

The region spanning 47-155 (WICVAHSSEL…LEEYAGFVFI (109 aa)) is the Rieske domain. Positions 89, 91, 109, and 112 each coordinate [2Fe-2S] cluster. H211, H216, and D325 together coordinate Fe cation.

It belongs to the bacterial ring-hydroxylating dioxygenase alpha subunit family. CntA subfamily. In terms of assembly, composed of an oxygenase subunit and a reductase subunit. The cofactor is [2Fe-2S] cluster. Requires Fe cation as cofactor.

It catalyses the reaction (R)-carnitine + NADH + O2 + H(+) = (3R)-3-hydroxy-4-oxobutanoate + trimethylamine + NAD(+) + H2O. The catalysed reaction is (R)-carnitine + NADPH + O2 + H(+) = (3R)-3-hydroxy-4-oxobutanoate + trimethylamine + NADP(+) + H2O. Its pathway is amine and polyamine metabolism; carnitine metabolism. Functionally, converts carnitine to trimethylamine and malic semialdehyde. This chain is Carnitine monooxygenase oxygenase subunit (yeaW), found in Escherichia coli O157:H7.